We begin with the raw amino-acid sequence, 315 residues long: Acetyl-coenzyme A carboxylase carboxyl transferase subunit alpha (315 aa).

Residues 36–289 form the CoA carboxyltransferase C-terminal domain; it reads LGKKRLELME…RKAVAAELKV (254 aa).

The protein belongs to the AccA family. Acetyl-CoA carboxylase is a heterohexamer composed of biotin carboxyl carrier protein (AccB), biotin carboxylase (AccC) and two subunits each of ACCase subunit alpha (AccA) and ACCase subunit beta (AccD).

It is found in the cytoplasm. It catalyses the reaction N(6)-carboxybiotinyl-L-lysyl-[protein] + acetyl-CoA = N(6)-biotinyl-L-lysyl-[protein] + malonyl-CoA. Its pathway is lipid metabolism; malonyl-CoA biosynthesis; malonyl-CoA from acetyl-CoA: step 1/1. Component of the acetyl coenzyme A carboxylase (ACC) complex. First, biotin carboxylase catalyzes the carboxylation of biotin on its carrier protein (BCCP) and then the CO(2) group is transferred by the carboxyltransferase to acetyl-CoA to form malonyl-CoA. The chain is Acetyl-coenzyme A carboxylase carboxyl transferase subunit alpha from Francisella philomiragia subsp. philomiragia (strain ATCC 25017 / CCUG 19701 / FSC 153 / O#319-036).